Consider the following 440-residue polypeptide: Putative epoxide hydrolase (440 aa).

A disordered region spans residues 1-21; sequence MTKTLAEQPGEGAAPVSPSPS. The segment at residues 1–49 is a signal peptide (tat-type signal); that stretch reads MTKTLAEQPGEGAAPVSPSPSRRALLHGAAGLGALAAGAAVAGPGLAFA.

Belongs to the peptidase S33 family. In terms of processing, predicted to be exported by the Tat system. The position of the signal peptide cleavage has not been experimentally proven.

It catalyses the reaction an epoxide + H2O = an ethanediol. The chain is Putative epoxide hydrolase from Stigmatella aurantiaca (strain DW4/3-1).